Reading from the N-terminus, the 411-residue chain is Serpin A3-5 (411 aa).

The signal sequence occupies residues 1 to 24 (MRAERTSFLLALGLLMAGIRSVHC). Residues N100, N180, N230, N264, and N318 are each glycosylated (N-linked (GlcNAc...) asparagine).

This sequence belongs to the serpin family. In terms of assembly, homodimer.

It localises to the cytoplasmic vesicle. It is found in the secretory vesicle. The protein resides in the chromaffin granule. Its subcellular location is the secreted. Functionally, serine protease inhibitor. This Bos taurus (Bovine) protein is Serpin A3-5.